A 356-amino-acid chain; its full sequence is Histidinol-phosphate aminotransferase (356 aa).

Lysine 208 carries the N6-(pyridoxal phosphate)lysine modification.

It belongs to the class-II pyridoxal-phosphate-dependent aminotransferase family. Histidinol-phosphate aminotransferase subfamily. Homodimer. Pyridoxal 5'-phosphate serves as cofactor.

It catalyses the reaction L-histidinol phosphate + 2-oxoglutarate = 3-(imidazol-4-yl)-2-oxopropyl phosphate + L-glutamate. The protein operates within amino-acid biosynthesis; L-histidine biosynthesis; L-histidine from 5-phospho-alpha-D-ribose 1-diphosphate: step 7/9. The chain is Histidinol-phosphate aminotransferase from Lactococcus lactis subsp. cremoris (strain MG1363).